A 663-amino-acid chain; its full sequence is uncharacterized protein (663 aa).

Gly207–Thr214 is a binding site for ATP.

Belongs to the DNA2/NAM7 helicase family.

This is an uncharacterized protein from Methanocaldococcus jannaschii (strain ATCC 43067 / DSM 2661 / JAL-1 / JCM 10045 / NBRC 100440) (Methanococcus jannaschii).